The chain runs to 179 residues: ATP synthase subunit delta (179 aa).

The protein belongs to the ATPase delta chain family. F-type ATPases have 2 components, F(1) - the catalytic core - and F(0) - the membrane proton channel. F(1) has five subunits: alpha(3), beta(3), gamma(1), delta(1), epsilon(1). F(0) has three main subunits: a(1), b(2) and c(10-14). The alpha and beta chains form an alternating ring which encloses part of the gamma chain. F(1) is attached to F(0) by a central stalk formed by the gamma and epsilon chains, while a peripheral stalk is formed by the delta and b chains.

It localises to the cell inner membrane. Functionally, f(1)F(0) ATP synthase produces ATP from ADP in the presence of a proton or sodium gradient. F-type ATPases consist of two structural domains, F(1) containing the extramembraneous catalytic core and F(0) containing the membrane proton channel, linked together by a central stalk and a peripheral stalk. During catalysis, ATP synthesis in the catalytic domain of F(1) is coupled via a rotary mechanism of the central stalk subunits to proton translocation. In terms of biological role, this protein is part of the stalk that links CF(0) to CF(1). It either transmits conformational changes from CF(0) to CF(1) or is implicated in proton conduction. The chain is ATP synthase subunit delta from Maricaulis maris (strain MCS10) (Caulobacter maris).